We begin with the raw amino-acid sequence, 1146 residues long: MGETIASKEMHEYFDELEARLKKAIEIANTARARGGDPKPVVEIPLAKDLADRVENLIGVEGVAAKIRVLEEKMSREECALEIGRQVAEGEVGNFATKKDAVEAAIRVSMAVITEGVVAAPIEGINKVELGKNDDGSEYIRIFYSGPIRSAGGTAQALSVLVGDYVRRGIGIDRYKPRPEEVERYVEEIVLYKRVASLQYMPSEDEIRLIVKNCPVCIDGDPTEEAEVEGHRNLERIGTNRIRGGMCLVLAEGLALKAPKVKKHVNKLNMDGWDWLDILIGGAKTGGDEEDEKKNKIKPKDKYIRDLIAGRPVFSHPSRPGGFRLRYGRSRNTSFAAAGINPSTMVLLDDFITNGTQLKVERPGKAAAMSAVDSIEGPTVRLYSGDLVRIDDIKEAYELRSQVEVIVDIGEILINYGDFLENNHPLMPSPYVFEWWRYDYEAACSEIIPEDELKDPSSALALRLAEEYDVPLHPKFTYLWHDINRTEFEALRKFVVGRGNFSVEDEILRLPLKACIENGVKLILEKLLVLHRVKADTILIKEALPFILCLGLDCHLKEKAPMPDTDNMVNATAFLSGFKVLPRAPSRIGARMGRPEKANLRKMSPAAQVLFPIGNAGGLTRNLVSASNYSVSMNGKIGEIEVEMGIRECPACGKETYFWRCDCGEYTRPKLFCPRCKIEVRNSETCPKCGRKPTSVSNVKLDFRSIYKRAFENVGEREKMDLIKGVKRLMNGQMTPEPLEKGILRAKHDVYIFKDGTVRYDMSDIPLTHVRADEIGITAAKLRELGYVEDIYGNPLERDDQIVCLKVQDLVISYDGGGYMLRTAQYVDDLLVKYYGVEPYYNAKTIQDLVGVLLIGLAPHTSAGVLGRLIGFTRASVGYAHPFFHASKRRNCDGDEDCVMLLMDGILNFSRAYLPEKRGGKMDAPLVLTTRIDPKEVDKEAHNIDLPARYPLEFYRATQEIKNPTELEGIMDLVSSRLGTPEQYEHFMFTHDTSDIAAGPLNSSYKTLGSMIDKMEAQLSLANKIRAVDAPDVAERVLKSHFLPDLLGNLRSFSRQRMRCIKCGAKFRRPPLTGACPKCGGNVVLTVHEGAVRKYLEISKEIGKRYGVSSYTQQRIELLDKDICSLFENHRVKQLGISDFMSGSAR.

This sequence belongs to the archaeal DNA polymerase II family. As to quaternary structure, heterodimer of a large subunit and a small subunit.

It catalyses the reaction DNA(n) + a 2'-deoxyribonucleoside 5'-triphosphate = DNA(n+1) + diphosphate. The catalysed reaction is Exonucleolytic cleavage in the 3'- to 5'-direction to yield nucleoside 5'-phosphates.. Functionally, possesses two activities: a DNA synthesis (polymerase) and an exonucleolytic activity that degrades single-stranded DNA in the 3'- to 5'-direction. Has a template-primer preference which is characteristic of a replicative DNA polymerase. The polypeptide is DNA polymerase II large subunit (Methanosarcina barkeri (strain Fusaro / DSM 804)).